The primary structure comprises 131 residues: UPF0102 protein AZC_4471 (131 aa).

This sequence belongs to the UPF0102 family.

This is UPF0102 protein AZC_4471 from Azorhizobium caulinodans (strain ATCC 43989 / DSM 5975 / JCM 20966 / LMG 6465 / NBRC 14845 / NCIMB 13405 / ORS 571).